Consider the following 403-residue polypeptide: Argininosuccinate synthase (403 aa).

10–18 is an ATP binding site; it reads AYSGGVDTS. Residue Y89 participates in L-citrulline binding. An ATP-binding site is contributed by G119. Residues T121, N125, and D126 each coordinate L-aspartate. N125 is a binding site for L-citrulline. L-citrulline-binding residues include R129, S177, S186, E262, and Y274.

It belongs to the argininosuccinate synthase family. Type 1 subfamily. As to quaternary structure, homotetramer.

The protein localises to the cytoplasm. The enzyme catalyses L-citrulline + L-aspartate + ATP = 2-(N(omega)-L-arginino)succinate + AMP + diphosphate + H(+). It participates in amino-acid biosynthesis; L-arginine biosynthesis; L-arginine from L-ornithine and carbamoyl phosphate: step 2/3. This chain is Argininosuccinate synthase, found in Synechococcus sp. (strain JA-3-3Ab) (Cyanobacteria bacterium Yellowstone A-Prime).